The primary structure comprises 282 residues: HTH-type transcriptional activator RhaR (282 aa).

In terms of domain architecture, HTH araC/xylS-type spans 179-277; that stretch reads DKLITRLAAS…GMTPSQWRHL (99 aa). 2 consecutive DNA-binding regions (H-T-H motif) follow at residues 196-217 and 244-267; these read DKFC…RQQT and ISDI…TRET.

As to quaternary structure, binds DNA as a dimer.

It localises to the cytoplasm. Functionally, activates expression of the rhaSR operon in response to L-rhamnose. This Shigella dysenteriae serotype 1 (strain Sd197) protein is HTH-type transcriptional activator RhaR.